A 264-amino-acid polypeptide reads, in one-letter code: Type III pantothenate kinase (264 aa).

Residue aspartate 6 to valine 13 coordinates ATP. Substrate-binding positions include tyrosine 100 and glycine 107–arginine 110. Aspartate 109 serves as the catalytic Proton acceptor. Aspartate 129 lines the K(+) pocket. ATP is bound at residue threonine 132. A substrate-binding site is contributed by threonine 185.

This sequence belongs to the type III pantothenate kinase family. Homodimer. NH4(+) serves as cofactor. It depends on K(+) as a cofactor.

It localises to the cytoplasm. It catalyses the reaction (R)-pantothenate + ATP = (R)-4'-phosphopantothenate + ADP + H(+). It participates in cofactor biosynthesis; coenzyme A biosynthesis; CoA from (R)-pantothenate: step 1/5. Its function is as follows. Catalyzes the phosphorylation of pantothenate (Pan), the first step in CoA biosynthesis. The protein is Type III pantothenate kinase of Rubrobacter xylanophilus (strain DSM 9941 / JCM 11954 / NBRC 16129 / PRD-1).